The sequence spans 390 residues: Lipid-A-disaccharide synthase (390 aa).

It belongs to the LpxB family.

It catalyses the reaction a lipid X + a UDP-2-N,3-O-bis[(3R)-3-hydroxyacyl]-alpha-D-glucosamine = a lipid A disaccharide + UDP + H(+). Its pathway is bacterial outer membrane biogenesis; LPS lipid A biosynthesis. Condensation of UDP-2,3-diacylglucosamine and 2,3-diacylglucosamine-1-phosphate to form lipid A disaccharide, a precursor of lipid A, a phosphorylated glycolipid that anchors the lipopolysaccharide to the outer membrane of the cell. The protein is Lipid-A-disaccharide synthase of Paramagnetospirillum magneticum (strain ATCC 700264 / AMB-1) (Magnetospirillum magneticum).